The sequence spans 300 residues: MKIAILSRDGTLYSCKRLREAAIQRGHLVEILDPLSCYMNINPAASSIHYKGRKLPHFDAVIPRIGTAITFYGTAALRQFEMLGSYPLNESVAIARARDKLRSMQLLARQGIDLPVTGIAHSPDDTSDLIDMVGGAPLVVKLVEGTQGIGVVLAETRQAAESVIDAFRGLNAHILVQEYIKEAQGCDIRCLVVGDEVVAAIERRAKEGDFRSNLHRGGAASVASITPQEREIAIKAARTMALDVAGVDILRANRGPLVMEVNASPGLEGIEKTTGIDIAGKMIRWIERYATTEYCLKTGG.

Positions 104–287 constitute an ATP-grasp domain; that stretch reads MQLLARQGID…IAGKMIRWIE (184 aa). ATP is bound by residues lysine 141, 178 to 179, aspartate 187, and 211 to 213; these read EY and RSN. The Mg(2+) site is built by aspartate 248, glutamate 260, and asparagine 262. Aspartate 248, glutamate 260, and asparagine 262 together coordinate Mn(2+).

This sequence belongs to the RimK family. Requires Mg(2+) as cofactor. Mn(2+) serves as cofactor.

In terms of biological role, an L-glutamate ligase that catalyzes the ATP-dependent post-translational addition of glutamate residues to the C-terminus of ribosomal protein bS6 (RpsF). Is also able to catalyze the synthesis of poly-alpha-glutamate in vitro, via ATP hydrolysis from unprotected glutamate as substrate. The number of glutamate residues added to either RpsF or to poly-alpha-glutamate changes with pH. This chain is Ribosomal protein bS6--L-glutamate ligase, found in Shigella boydii serotype 18 (strain CDC 3083-94 / BS512).